Reading from the N-terminus, the 298-residue chain is ADP/ATP translocase 2 (298 aa).

Methionine 1 bears the N-acetylmethionine mark. At 1–7 (MTDAAVS) the chain is on the mitochondrial intermembrane side. Threonine 2 is subject to N-acetylthreonine; in ADP/ATP translocase 2, N-terminally processed. The Solcar 1 repeat unit spans residues 6-98 (VSFAKDFLAG…FAFKDKYKQI (93 aa)). Serine 7 bears the Phosphoserine mark. A helical transmembrane segment spans residues 8-37 (FAKDFLAGGVAAAISKTAVAPIERVKLLLQ). Lysine 23 carries the N6-malonyllysine modification. Over 38–74 (VQHASKQITADKQYKGIIDCVVRIPKEQGVLSFWRGN) the chain is Mitochondrial matrix. Lysine 43 bears the N6-succinyllysine mark. N6,N6,N6-trimethyllysine; alternate is present on lysine 52. An N6,N6-dimethyllysine; alternate modification is found at lysine 52. Residue lysine 52 is modified to N6-methyllysine; alternate. The helical transmembrane segment at 75–99 (LANVIRYFPTQALNFAFKDKYKQIF) threads the bilayer. ADP is bound by residues arginine 80 and lysine 92. N6-malonyllysine occurs at positions 92 and 96. Residues 100–109 (LGGVDKRTQF) lie on the Mitochondrial intermembrane side of the membrane. At lysine 105 the chain carries N6-acetyllysine; alternate. At lysine 105 the chain carries N6-succinyllysine; alternate. Residues 110-130 (WRYFAGNLASGGAAGATSLCF) form a helical membrane-spanning segment. Solcar repeat units lie at residues 111–201 (RYFA…AKGM) and 212–297 (ISWM…IKKF). At 131-178 (VYPLDFARTRLAADVGKAGAEREFRGLGDCLVKIYKSDGIRGLYQGFN) the chain is on the mitochondrial matrix side. Lysine 147 carries the N6-methyllysine; alternate modification. At lysine 147 the chain carries N6-acetyllysine; alternate. Lysine 147 is modified (N6-succinyllysine; alternate). Lysine 147 is modified (N6-malonyllysine; alternate). Lysine 163 and lysine 166 each carry N6-acetyllysine. A helical membrane pass occupies residues 179–199 (VSVQGIIIYRAAYFGIYDTAK). The Mitochondrial intermembrane portion of the chain corresponds to 200–210 (GMLPDPKNTHI). The helical transmembrane segment at 211–231 (FISWMIAQSVTAVAGLTSYPF) threads the bilayer. Topologically, residues 232-273 (DTVRRRMMMQSGRKGTDIMYTGTLDCWRKIARDEGAKAFFKG) are mitochondrial matrix. Arginine 235 serves as a coordination point for ADP. The segment at 235–240 (RRRMMM) is important for transport activity. Residues 235-240 (RRRMMM) carry the Nucleotide carrier signature motif motif. Residue lysine 268 is modified to N6-acetyllysine; alternate. At lysine 268 the chain carries N6-succinyllysine; alternate. A helical membrane pass occupies residues 274 to 291 (AWSNVLRGMGGAFVLVLY). Residues 292–298 (DEIKKFT) lie on the Mitochondrial intermembrane side of the membrane.

The protein belongs to the mitochondrial carrier (TC 2.A.29) family. As to quaternary structure, monomer. Component of the MMXD complex, which includes CIAO1, ERCC2, CIAO2B, MMS19 and SLC25A5/ANT2. Interacts with AK4. Interacts with TIMM44; leading to inhibit the presequence translocase TIMM23, thereby promoting stabilization of PINK1. Trimethylated by ANTKMT at Lys-52.

The protein resides in the mitochondrion inner membrane. It is found in the membrane. It carries out the reaction ADP(in) + ATP(out) = ADP(out) + ATP(in). The catalysed reaction is H(+)(in) = H(+)(out). Its activity is regulated as follows. The matrix-open state (m-state) is inhibited by the membrane-permeable bongkrekic acid (BKA). The cytoplasmic-open state (c-state) is inhibited by the membrane-impermeable toxic inhibitor carboxyatractyloside (CATR). Proton transporter activity is inhibited by ADP:ATP antiporter activity. ADP:ATP antiporter that mediates import of ADP into the mitochondrial matrix for ATP synthesis, and export of ATP out to fuel the cell. Cycles between the cytoplasmic-open state (c-state) and the matrix-open state (m-state): operates by the alternating access mechanism with a single substrate-binding site intermittently exposed to either the cytosolic (c-state) or matrix (m-state) side of the inner mitochondrial membrane. In addition to its ADP:ATP antiporter activity, also involved in mitochondrial uncoupling and mitochondrial permeability transition pore (mPTP) activity. Plays a role in mitochondrial uncoupling by acting as a proton transporter: proton transport uncouples the proton flows via the electron transport chain and ATP synthase to reduce the efficiency of ATP production and cause mitochondrial thermogenesis. Proton transporter activity is inhibited by ADP:ATP antiporter activity, suggesting that SLC25A5/ANT2 acts as a master regulator of mitochondrial energy output by maintaining a delicate balance between ATP production (ADP:ATP antiporter activity) and thermogenesis (proton transporter activity). Proton transporter activity requires free fatty acids as cofactor, but does not transport it. Probably mediates mitochondrial uncoupling in tissues that do not express UCP1. Also plays a key role in mPTP opening, a non-specific pore that enables free passage of the mitochondrial membranes to solutes of up to 1.5 kDa, and which contributes to cell death. It is however unclear if SLC25A5/ANT2 constitutes a pore-forming component of mPTP or regulates it. Acts as a regulator of mitophagy independently of ADP:ATP antiporter activity: promotes mitophagy via interaction with TIMM44, leading to inhibit the presequence translocase TIMM23, thereby promoting stabilization of PINK1. As part of the mitotic spindle-associated MMXD complex it may play a role in chromosome segregation. This is ADP/ATP translocase 2 from Bos taurus (Bovine).